The following is a 408-amino-acid chain: MKNIIILIINTGSSSLKFTLYEYQYQSEQILASGIIEKIKTTQAIIKIKFKNKLLELTNLNIKSHKKALKHLIKTLTNKKTKIINYLDQIQGIGHRIVHGGAQFKNSVIINQNVLNELKKISHLAPLHNPIAIKVIEQMFILFPNAKQVACFDTSWHQTMNQKAFLYATPYSWYKDYHIRKYGFHGLSYAYITKRTAIILNKNIEDLNLIILHLGNGASINAVQKGRSYDTSMGLTPLEGLVMGTRSGDIDPTIIPLMSKILKKTTKQIENILNKESGMLGISCKSNDLRDIWIESNNNEYNSKLAVEIMTYRIKKYIGSYLAALDFNIDAIIFTAGIGTSDYEIRKLSLQGFEKIGIKIDFQKNNLAIDKNTEYDISSNQSNIKILVIPTNEELTILEDTYDLIKNN.

Asn-10 serves as a coordination point for Mg(2+). Lys-17 is a binding site for ATP. Arg-96 is a substrate binding site. The Proton donor/acceptor role is filled by Asp-153. Residues 213–217 (HLGNG) and 288–290 (DLR) contribute to the ATP site. Residue Glu-393 participates in Mg(2+) binding.

It belongs to the acetokinase family. In terms of assembly, homodimer. Mg(2+) is required as a cofactor. It depends on Mn(2+) as a cofactor.

Its subcellular location is the cytoplasm. The enzyme catalyses acetate + ATP = acetyl phosphate + ADP. It functions in the pathway metabolic intermediate biosynthesis; acetyl-CoA biosynthesis; acetyl-CoA from acetate: step 1/2. Catalyzes the formation of acetyl phosphate from acetate and ATP. Can also catalyze the reverse reaction. The chain is Acetate kinase from Borrelia recurrentis (strain A1).